Consider the following 399-residue polypeptide: uncharacterized protein (399 aa).

The segment at 254-335 is disordered; the sequence is SRVSTGDTSP…FFRDSDDDGD (82 aa). The segment covering 255–264 has biased composition (polar residues); that stretch reads RVSTGDTSPY. Positions 310–329 are enriched in basic and acidic residues; the sequence is RNAEMKKSHSANDSEEFFRD.

This is an uncharacterized protein from Xenopus laevis (African clawed frog).